A 441-amino-acid polypeptide reads, in one-letter code: MVLDGVRKALSRFLSGKGDYERAVKEFIRDLQKELIKADVNVKLVLELTKKIRERALKEEPPPGITRREWFVNIVYEELSKFFGGDKKPDIKPKKKPWVMLLVGLQGSGKTTTAAKLAYYYKLEGYRVGLVAADTYRPAAYDQLKQLGEQIGVPVYGEPDNKDAVEIARRGVEYFVSRGFDIVIVDTAGRHHREEDLLREMREIAENIKPDEVVLVIDAAIGQQAHDLAKKFHEATPIGSIIVTKLDGTAKGGGALSAVAVTGATIKFIGTGEKIDELEVFRPPRFVARILGIGDLEGLIEKVRRIKVEFTEKDVEEFLSGRLNMRLVYKQLVSLRKMGPLRKILQMIPGLSLKIPLEIEAGKAEEKIKKWLAIINSMTYEELDKPEIIDRRRIRRIAYGAGVKPEDVRELLKQYEMMKKLSKQLRKRRDLLEKLQLGFKP.

Residues 104–111, 186–190, and 244–247 each bind GTP; these read GLQGSGKT, DTAGR, and TKLD.

It belongs to the GTP-binding SRP family. SRP54 subfamily. As to quaternary structure, part of the signal recognition particle protein translocation system, which is composed of SRP and FtsY. Archaeal SRP consists of a 7S RNA molecule of 300 nucleotides and two protein subunits: SRP54 and SRP19.

It localises to the cytoplasm. The enzyme catalyses GTP + H2O = GDP + phosphate + H(+). Functionally, involved in targeting and insertion of nascent membrane proteins into the cytoplasmic membrane. Binds to the hydrophobic signal sequence of the ribosome-nascent chain (RNC) as it emerges from the ribosomes. The SRP-RNC complex is then targeted to the cytoplasmic membrane where it interacts with the SRP receptor FtsY. This chain is Signal recognition particle 54 kDa protein, found in Staphylothermus marinus (strain ATCC 43588 / DSM 3639 / JCM 9404 / F1).